Here is a 439-residue protein sequence, read N- to C-terminus: Adenylosuccinate synthetase (439 aa).

GTP contacts are provided by residues 13 to 19 (GDEGKGK) and 41 to 43 (GHT). D14 serves as the catalytic Proton acceptor. The Mg(2+) site is built by D14 and G41. IMP contacts are provided by residues 14–17 (DEGK), 39–42 (NAGH), T130, R144, Q226, T241, and R313. Residue H42 is the Proton donor of the active site. 309-315 (ASTGRQR) lines the substrate pocket. Residues R315, 341–343 (KLD), and 422–424 (STG) contribute to the GTP site.

This sequence belongs to the adenylosuccinate synthetase family. In terms of assembly, homodimer. Mg(2+) serves as cofactor.

Its subcellular location is the cytoplasm. The enzyme catalyses IMP + L-aspartate + GTP = N(6)-(1,2-dicarboxyethyl)-AMP + GDP + phosphate + 2 H(+). It functions in the pathway purine metabolism; AMP biosynthesis via de novo pathway; AMP from IMP: step 1/2. Its function is as follows. Plays an important role in the de novo pathway of purine nucleotide biosynthesis. Catalyzes the first committed step in the biosynthesis of AMP from IMP. This Acinetobacter baylyi (strain ATCC 33305 / BD413 / ADP1) protein is Adenylosuccinate synthetase.